A 205-amino-acid polypeptide reads, in one-letter code: Ribosomal RNA small subunit methyltransferase G (205 aa).

Residues glycine 73, leucine 78, 124–125 (VE), and arginine 139 each bind S-adenosyl-L-methionine.

Belongs to the methyltransferase superfamily. RNA methyltransferase RsmG family.

It localises to the cytoplasm. It catalyses the reaction guanosine(527) in 16S rRNA + S-adenosyl-L-methionine = N(7)-methylguanosine(527) in 16S rRNA + S-adenosyl-L-homocysteine. Functionally, specifically methylates the N7 position of guanine in position 527 of 16S rRNA. The chain is Ribosomal RNA small subunit methyltransferase G from Erwinia tasmaniensis (strain DSM 17950 / CFBP 7177 / CIP 109463 / NCPPB 4357 / Et1/99).